Consider the following 319-residue polypeptide: ATP-dependent 6-phosphofructokinase (319 aa).

Gly-11 is an ATP binding site. An ADP-binding site is contributed by 21–25 (RAVVR). Residues 72–73 (RC) and 102–105 (GDGS) each bind ATP. Asp-103 provides a ligand contact to Mg(2+). 125 to 127 (TID) contacts substrate. Asp-127 (proton acceptor) is an active-site residue. Arg-154 lines the ADP pocket. Residues Arg-162 and 169–171 (MGR) each bind substrate. Residues 185–187 (GAE), Arg-211, and 213–215 (KRH) each bind ADP. Substrate is bound by residues Glu-222, Arg-243, and 249–252 (HVQR).

The protein belongs to the phosphofructokinase type A (PFKA) family. ATP-dependent PFK group I subfamily. Prokaryotic clade 'B1' sub-subfamily. In terms of assembly, homotetramer. The cofactor is Mg(2+).

It is found in the cytoplasm. It catalyses the reaction beta-D-fructose 6-phosphate + ATP = beta-D-fructose 1,6-bisphosphate + ADP + H(+). The protein operates within carbohydrate degradation; glycolysis; D-glyceraldehyde 3-phosphate and glycerone phosphate from D-glucose: step 3/4. Its activity is regulated as follows. Allosterically activated by ADP and other diphosphonucleosides, and allosterically inhibited by phosphoenolpyruvate. Catalyzes the phosphorylation of D-fructose 6-phosphate to fructose 1,6-bisphosphate by ATP, the first committing step of glycolysis. The polypeptide is ATP-dependent 6-phosphofructokinase (Clostridioides difficile (strain 630) (Peptoclostridium difficile)).